The chain runs to 236 residues: Uridylate kinase (236 aa).

10 to 13 is an ATP binding site; that stretch reads KLSG. Residues 18 to 23 form an involved in allosteric activation by GTP region; sequence GEDGYG. Gly52 lines the UMP pocket. Gly53 and Arg57 together coordinate ATP. UMP contacts are provided by residues Asp72 and 133-140; that span reads TGNPYFTT. Residues Thr160, Tyr166, and Asp169 each contribute to the ATP site.

This sequence belongs to the UMP kinase family. Homohexamer.

The protein localises to the cytoplasm. The catalysed reaction is UMP + ATP = UDP + ADP. The protein operates within pyrimidine metabolism; CTP biosynthesis via de novo pathway; UDP from UMP (UMPK route): step 1/1. With respect to regulation, allosterically activated by GTP. Inhibited by UTP. Catalyzes the reversible phosphorylation of UMP to UDP. This Chlorobium phaeobacteroides (strain DSM 266 / SMG 266 / 2430) protein is Uridylate kinase.